Here is a 254-residue protein sequence, read N- to C-terminus: 3-dehydroquinate dehydratase (254 aa).

3-dehydroquinate-binding positions include 47–49 (EWR) and Arg-83. His-144 acts as the Proton donor/acceptor in catalysis. The active-site Schiff-base intermediate with substrate is the Lys-171. 3-dehydroquinate-binding residues include Arg-214, Ser-233, and Gln-237.

This sequence belongs to the type-I 3-dehydroquinase family. Homodimer.

It catalyses the reaction 3-dehydroquinate = 3-dehydroshikimate + H2O. Its pathway is metabolic intermediate biosynthesis; chorismate biosynthesis; chorismate from D-erythrose 4-phosphate and phosphoenolpyruvate: step 3/7. Involved in the third step of the chorismate pathway, which leads to the biosynthesis of aromatic amino acids. Catalyzes the cis-dehydration of 3-dehydroquinate (DHQ) and introduces the first double bond of the aromatic ring to yield 3-dehydroshikimate. The sequence is that of 3-dehydroquinate dehydratase from Bacillus licheniformis (strain ATCC 14580 / DSM 13 / JCM 2505 / CCUG 7422 / NBRC 12200 / NCIMB 9375 / NCTC 10341 / NRRL NRS-1264 / Gibson 46).